A 667-amino-acid polypeptide reads, in one-letter code: Gamma-tubulin complex component 4 (667 aa).

Residues 425-445 form a disordered region; the sequence is HKADATQAREGPSRETSPREA.

This sequence belongs to the TUBGCP family. In terms of assembly, component of the gamma-tubulin ring complex (gTuRC) consisting of TUBGCP2, TUBGCP3, TUBGCP4, TUBGCP5 and TUBGCP6 and gamma-tubulin TUBG1 or TUBG2. TUBGCP2, TUBGCP3, TUBGCP4, TUBGCP5 and TUBGCP6 assemble in a 5:5:2:1:1 stoichiometry; each is associated with a gamma-tubulin, thereby arranging 14 gamma-tubulins in a helical manner. Gamma-tubulin at the first position is blocked by TUBGCP3 at the last position, allowing 13 protafilaments to grow into a microtubule. The gTuRC (via TUBGCP3 and TUBGCP6) interacts with ACTB and MZT1; the interactions form a luminal bridge that stabilizes the initial structure during complex assembly. The gTuRC (via TUBGCP2) interacts with MZT2A/MZT2B and CDK5RAP2 (via CM1 motif); the interactions play a role in gTuRC activation. Interacts with NINL. Interacts with ATF5; the ATF5:PCNT:polyglutamylated tubulin (PGT) tripartite unites the mother centriole and the pericentriolar material (PCM) in the centrosome. In terms of tissue distribution, ubiquitously expressed.

The protein resides in the cytoplasm. It localises to the cytoskeleton. It is found in the microtubule organizing center. The protein localises to the centrosome. Its function is as follows. Component of the gamma-tubulin ring complex (gTuRC) which mediates microtubule nucleation. The gTuRC regulates the minus-end nucleation of alpha-beta tubulin heterodimers that grow into microtubule protafilaments, a critical step in centrosome duplication and spindle formation. This Homo sapiens (Human) protein is Gamma-tubulin complex component 4 (TUBGCP4).